The following is an 86-amino-acid chain: Large ribosomal subunit protein bL31B (86 aa).

The protein belongs to the bacterial ribosomal protein bL31 family. Type B subfamily. In terms of assembly, part of the 50S ribosomal subunit.

The chain is Large ribosomal subunit protein bL31B from Yersinia pseudotuberculosis serotype O:1b (strain IP 31758).